The primary structure comprises 577 residues: Acyl-coenzyme A synthetase ACSM2B, mitochondrial (577 aa).

The N-terminal 46 residues, 1–46 (MHWLRKVQGLCTLWGTQMSSRTLYINSRQLVSLQWGHQEVPAKFNF), are a transit peptide targeting the mitochondrion. Residue Q139 participates in CoA binding. ATP contacts are provided by residues 221 to 229 (TSGTSGLPK), 359 to 364 (EFYGQT), D446, and R461. T364 provides a ligand contact to substrate. 469–471 (SGY) is a binding site for CoA. R472 lines the substrate pocket. A CoA-binding site is contributed by R501. At S513 the chain carries Phosphoserine. CoA-binding positions include K532 and 540–542 (YPR). An ATP-binding site is contributed by K557.

It belongs to the ATP-dependent AMP-binding enzyme family. Monomer. Mg(2+) is required as a cofactor. Requires Mn(2+) as cofactor. As to expression, detected in liver.

Its subcellular location is the mitochondrion. The enzyme catalyses a medium-chain fatty acid + ATP + CoA = a medium-chain fatty acyl-CoA + AMP + diphosphate. The catalysed reaction is benzoate + ATP + CoA = benzoyl-CoA + AMP + diphosphate. It catalyses the reaction hexanoate + ATP + CoA = hexanoyl-CoA + AMP + diphosphate. It carries out the reaction butanoate + ATP + CoA = butanoyl-CoA + AMP + diphosphate. The enzyme catalyses octanoate + ATP + CoA = octanoyl-CoA + AMP + diphosphate. The catalysed reaction is decanoate + ATP + CoA = decanoyl-CoA + AMP + diphosphate. Its activity is regulated as follows. Activated by monovalent cations, such as potassium, rubidium or ammonium. In terms of biological role, catalyzes the activation of fatty acids by CoA to produce an acyl-CoA, the first step in fatty acid metabolism. Capable of activating medium-chain fatty acids (e.g. butyric (C4) to decanoic (C10) acids), and certain carboxylate-containing xenobiotics, e.g. benzoate. The sequence is that of Acyl-coenzyme A synthetase ACSM2B, mitochondrial (ACSM2B) from Homo sapiens (Human).